The sequence spans 390 residues: Putative nickel insertion protein (390 aa).

This sequence belongs to the LarC family.

This chain is Putative nickel insertion protein, found in Geotalea uraniireducens (strain Rf4) (Geobacter uraniireducens).